Reading from the N-terminus, the 408-residue chain is Argininosuccinate synthase (408 aa).

Residue 8–16 participates in ATP binding; that stretch reads AYSGGLDTS. Tyrosine 86 contacts L-citrulline. Glycine 116 is a binding site for ATP. Residues threonine 118, asparagine 122, and aspartate 123 each contribute to the L-aspartate site. Asparagine 122 contacts L-citrulline. Residues arginine 126, serine 174, glutamate 259, and tyrosine 271 each coordinate L-citrulline.

Belongs to the argininosuccinate synthase family. Type 1 subfamily. In terms of assembly, homotetramer.

It localises to the cytoplasm. It catalyses the reaction L-citrulline + L-aspartate + ATP = 2-(N(omega)-L-arginino)succinate + AMP + diphosphate + H(+). The protein operates within amino-acid biosynthesis; L-arginine biosynthesis; L-arginine from L-ornithine and carbamoyl phosphate: step 2/3. This Leuconostoc mesenteroides subsp. mesenteroides (strain ATCC 8293 / DSM 20343 / BCRC 11652 / CCM 1803 / JCM 6124 / NCDO 523 / NBRC 100496 / NCIMB 8023 / NCTC 12954 / NRRL B-1118 / 37Y) protein is Argininosuccinate synthase.